A 205-amino-acid polypeptide reads, in one-letter code: Holliday junction branch migration complex subunit RuvA (205 aa).

Residues 1–64 form a domain I region; sequence MIGRIRGLLI…EDAQLLYGFI (64 aa). A domain II region spans residues 65–143; it reads SKQERSLFRL…SLMEASVGSE (79 aa). Residues 144–156 are flexible linker; sequence REFMLQSNYTAPE. The tract at residues 157-205 is domain III; the sequence is AVNTAEEDAIAALLSLGYKPAQASKAVSSVYTDGMSSETLIKSALKSML.

The protein belongs to the RuvA family. In terms of assembly, homotetramer. Forms an RuvA(8)-RuvB(12)-Holliday junction (HJ) complex. HJ DNA is sandwiched between 2 RuvA tetramers; dsDNA enters through RuvA and exits via RuvB. An RuvB hexamer assembles on each DNA strand where it exits the tetramer. Each RuvB hexamer is contacted by two RuvA subunits (via domain III) on 2 adjacent RuvB subunits; this complex drives branch migration. In the full resolvosome a probable DNA-RuvA(4)-RuvB(12)-RuvC(2) complex forms which resolves the HJ.

It is found in the cytoplasm. Functionally, the RuvA-RuvB-RuvC complex processes Holliday junction (HJ) DNA during genetic recombination and DNA repair, while the RuvA-RuvB complex plays an important role in the rescue of blocked DNA replication forks via replication fork reversal (RFR). RuvA specifically binds to HJ cruciform DNA, conferring on it an open structure. The RuvB hexamer acts as an ATP-dependent pump, pulling dsDNA into and through the RuvAB complex. HJ branch migration allows RuvC to scan DNA until it finds its consensus sequence, where it cleaves and resolves the cruciform DNA. The polypeptide is Holliday junction branch migration complex subunit RuvA (Shewanella halifaxensis (strain HAW-EB4)).